Here is a 96-residue protein sequence, read N- to C-terminus: Co-chaperonin GroES (96 aa).

This sequence belongs to the GroES chaperonin family. Heptamer of 7 subunits arranged in a ring. Interacts with the chaperonin GroEL.

Its subcellular location is the cytoplasm. Its function is as follows. Together with the chaperonin GroEL, plays an essential role in assisting protein folding. The GroEL-GroES system forms a nano-cage that allows encapsulation of the non-native substrate proteins and provides a physical environment optimized to promote and accelerate protein folding. GroES binds to the apical surface of the GroEL ring, thereby capping the opening of the GroEL channel. The sequence is that of Co-chaperonin GroES from Delftia acidovorans (strain DSM 14801 / SPH-1).